We begin with the raw amino-acid sequence, 230 residues long: ATP synthase subunit a (230 aa).

5 helical membrane-spanning segments follow: residues Leu17–Ala37, Ile78–Ile98, Asp107–Ile127, Leu165–Val187, and Glu198–Ile218.

Belongs to the ATPase A chain family. In terms of assembly, F-type ATPases have 2 components, CF(1) - the catalytic core - and CF(0) - the membrane proton channel. CF(1) has five subunits: alpha(3), beta(3), gamma(1), delta(1), epsilon(1). CF(0) has three main subunits: a(1), b(2) and c(9-12). The alpha and beta chains form an alternating ring which encloses part of the gamma chain. CF(1) is attached to CF(0) by a central stalk formed by the gamma and epsilon chains, while a peripheral stalk is formed by the delta and b chains.

It is found in the cell inner membrane. Its function is as follows. Key component of the proton channel; it plays a direct role in the translocation of protons across the membrane. The polypeptide is ATP synthase subunit a (Legionella pneumophila (strain Corby)).